Consider the following 271-residue polypeptide: ATP synthase subunit a (271 aa).

5 consecutive transmembrane segments (helical) span residues 47–67 (WENI…AYLG), 107–127 (FLGT…VPLM), 133–153 (SLNI…FLNI), 209–229 (ILIG…ETFV), and 235–255 (LPFM…FTLL).

It belongs to the ATPase A chain family. In terms of assembly, F-type ATPases have 2 components, CF(1) - the catalytic core - and CF(0) - the membrane proton channel. CF(1) has five subunits: alpha(3), beta(3), gamma(1), delta(1), epsilon(1). CF(0) has three main subunits: a(1), b(2) and c(9-12). The alpha and beta chains form an alternating ring which encloses part of the gamma chain. CF(1) is attached to CF(0) by a central stalk formed by the gamma and epsilon chains, while a peripheral stalk is formed by the delta and b chains.

Its subcellular location is the cell inner membrane. Functionally, key component of the proton channel; it plays a direct role in the translocation of protons across the membrane. The sequence is that of ATP synthase subunit a from Protochlamydia amoebophila (strain UWE25).